Consider the following 63-residue polypeptide: RICHSQMSSQPPTTTFCRVNSCYRRTLRDPHDPRGTIIVRGCGCPRMKPGTKLECCTSDKCNV.

Disulfide bonds link C3–C22, C17–C42, C44–C55, and C56–C61.

This sequence belongs to the three-finger toxin family. Short-chain subfamily. Type B muscarinic toxin sub-subfamily. In terms of assembly, monomer. In terms of tissue distribution, expressed by the venom gland.

The protein resides in the secreted. Blocks M2 muscarinic acetylcholine receptors (CHRM2). Fully blocks the binding of N-methylscopolamine (NMS) and oxotremorine-M to M2 receptors, slightly increased NMS binding to M1 receptors. This chain is Muscarinic toxin 2, found in Dendroaspis angusticeps (Eastern green mamba).